The sequence spans 107 residues: DNA-directed RNA polymerase subunit omega (107 aa).

It belongs to the RNA polymerase subunit omega family. As to quaternary structure, the RNAP catalytic core consists of 2 alpha, 1 beta, 1 beta' and 1 omega subunit. When a sigma factor is associated with the core the holoenzyme is formed, which can initiate transcription.

It carries out the reaction RNA(n) + a ribonucleoside 5'-triphosphate = RNA(n+1) + diphosphate. Functionally, promotes RNA polymerase assembly. Latches the N- and C-terminal regions of the beta' subunit thereby facilitating its interaction with the beta and alpha subunits. The polypeptide is DNA-directed RNA polymerase subunit omega (Oenococcus oeni (strain ATCC BAA-331 / PSU-1)).